Here is a 109-residue protein sequence, read N- to C-terminus: Spermidine export protein MdtI (109 aa).

The next 4 helical transmembrane spans lie at 6–26 (WWHA…NILL), 36–56 (WMGI…AQAV), 63–83 (IAYA…GWIM), and 88–108 (LNYK…MIKM).

It belongs to the drug/metabolite transporter (DMT) superfamily. Small multidrug resistance (SMR) (TC 2.A.7.1) family. MdtI subfamily. In terms of assembly, forms a complex with MdtJ.

It localises to the cell inner membrane. Functionally, catalyzes the excretion of spermidine. This Photorhabdus laumondii subsp. laumondii (strain DSM 15139 / CIP 105565 / TT01) (Photorhabdus luminescens subsp. laumondii) protein is Spermidine export protein MdtI.